Here is a 248-residue protein sequence, read N- to C-terminus: Probable transcriptional regulatory protein Rsph17025_0577 (248 aa).

Positions 1–21 are disordered; the sequence is MAGHSKWANIQHRKGKQDKLR.

This sequence belongs to the TACO1 family.

Its subcellular location is the cytoplasm. In Cereibacter sphaeroides (strain ATCC 17025 / ATH 2.4.3) (Rhodobacter sphaeroides), this protein is Probable transcriptional regulatory protein Rsph17025_0577.